A 21-amino-acid polypeptide reads, in one-letter code: Hydroxypicolinic acid-activating enzyme (21 aa).

Its function is as follows. Involved in etamycin biosynthesis. The chain is Hydroxypicolinic acid-activating enzyme from Streptomyces griseoviridis.